Reading from the N-terminus, the 154-residue chain is UPF0178 protein Glov_0658 (154 aa).

It belongs to the UPF0178 family.

The polypeptide is UPF0178 protein Glov_0658 (Trichlorobacter lovleyi (strain ATCC BAA-1151 / DSM 17278 / SZ) (Geobacter lovleyi)).